The sequence spans 518 residues: Integrator complex subunit 14 (518 aa).

The region spanning 2–204 (PTVVVMDVSL…KNVQSMFGKL (203 aa)) is the VWFA domain. Ser-10, Ser-12, and Thr-86 together coordinate Mg(2+). Lys-418 is modified (N6-acetyllysine).

Belongs to the Integrator subunit 14 family. As to quaternary structure, component of the Integrator complex, composed of core subunits INTS1, INTS2, INTS3, INTS4, INTS5, INTS6, INTS7, INTS8, INTS9/RC74, INTS10, INTS11/CPSF3L, INTS12, INTS13, INTS14 and INTS15. The core complex associates with protein phosphatase 2A subunits PPP2CA and PPP2R1A, to form the Integrator-PP2A (INTAC) complex. INTS14 is part of the tail subcomplex, composed of INTS10, INTS13, INTS14 and INTS15. Strongly expressed in numerous cancer cells compared with their non-cancerous counterparts (lung, prostate, colon, stomach and skin).

It localises to the nucleus. Functionally, component of the integrator complex, a multiprotein complex that terminates RNA polymerase II (Pol II) transcription in the promoter-proximal region of genes. The integrator complex provides a quality checkpoint during transcription elongation by driving premature transcription termination of transcripts that are unfavorably configured for transcriptional elongation: the complex terminates transcription by (1) catalyzing dephosphorylation of the C-terminal domain (CTD) of Pol II subunit POLR2A/RPB1 and SUPT5H/SPT5, (2) degrading the exiting nascent RNA transcript via endonuclease activity and (3) promoting the release of Pol II from bound DNA. The integrator complex is also involved in terminating the synthesis of non-coding Pol II transcripts, such as enhancer RNAs (eRNAs), small nuclear RNAs (snRNAs), telomerase RNAs and long non-coding RNAs (lncRNAs). Within the integrator complex, INTS14 is part of the integrator tail module that acts as a platform for the recruitment of transcription factors at promoters. This Homo sapiens (Human) protein is Integrator complex subunit 14.